A 504-amino-acid polypeptide reads, in one-letter code: uncharacterized protein (504 aa).

The interval Thr-36–Asp-60 is disordered. One can recognise an Integrase catalytic domain in the interval Gln-125–Arg-309.

This is an uncharacterized protein from Sinorhizobium fredii (strain NBRC 101917 / NGR234).